Reading from the N-terminus, the 533-residue chain is Probable bifunctional tRNA threonylcarbamoyladenosine biosynthesis protein (533 aa).

Positions 1–329 (MTRVLGIEGT…FRPDEVPVSW (329 aa)) are kae1. Fe cation is bound by residues H113 and H117. Residues 134 to 138 (NASGA), D166, G179, E183, and N262 each bind L-threonylcarbamoyladenylate. D290 contributes to the Fe cation binding site. Residues 338-533 (PVPTDERRQG…REIETRGRYQ (196 aa)) form the Protein kinase domain. ATP contacts are provided by residues 345-352 (RQGAEAVV) and K363. Residue D452 is the Proton acceptor; for kinase activity of the active site.

The protein in the N-terminal section; belongs to the KAE1 / TsaD family. It in the C-terminal section; belongs to the protein kinase superfamily. Tyr protein kinase family. BUD32 subfamily. Component of the KEOPS complex that consists of Kae1, Bud32, Cgi121 and Pcc1; the whole complex dimerizes. Fe(2+) serves as cofactor.

Its subcellular location is the cytoplasm. The catalysed reaction is L-seryl-[protein] + ATP = O-phospho-L-seryl-[protein] + ADP + H(+). It carries out the reaction L-threonyl-[protein] + ATP = O-phospho-L-threonyl-[protein] + ADP + H(+). It catalyses the reaction L-threonylcarbamoyladenylate + adenosine(37) in tRNA = N(6)-L-threonylcarbamoyladenosine(37) in tRNA + AMP + H(+). In terms of biological role, required for the formation of a threonylcarbamoyl group on adenosine at position 37 (t(6)A37) in tRNAs that read codons beginning with adenine. Is a component of the KEOPS complex that is probably involved in the transfer of the threonylcarbamoyl moiety of threonylcarbamoyl-AMP (TC-AMP) to the N6 group of A37. The Kae1 domain likely plays a direct catalytic role in this reaction. The Bud32 domain probably displays kinase activity that regulates Kae1 function. The sequence is that of Probable bifunctional tRNA threonylcarbamoyladenosine biosynthesis protein from Natronomonas pharaonis (strain ATCC 35678 / DSM 2160 / CIP 103997 / JCM 8858 / NBRC 14720 / NCIMB 2260 / Gabara) (Halobacterium pharaonis).